The following is a 74-amino-acid chain: UPF0346 protein LCA_0996 (74 aa).

Belongs to the UPF0346 family.

The chain is UPF0346 protein LCA_0996 from Latilactobacillus sakei subsp. sakei (strain 23K) (Lactobacillus sakei subsp. sakei).